We begin with the raw amino-acid sequence, 436 residues long: Protein TolB homolog (436 aa).

The signal sequence occupies residues 1-27 (MRHSIRLTAALLLAFIACFSFPLSAMA).

It belongs to the TolB family.

The protein localises to the periplasm. This is Protein TolB homolog from Chlorobium luteolum (strain DSM 273 / BCRC 81028 / 2530) (Pelodictyon luteolum).